A 240-amino-acid polypeptide reads, in one-letter code: DNA repair protein RecO (240 aa).

Belongs to the RecO family.

Involved in DNA repair and RecF pathway recombination. In Actinobacillus pleuropneumoniae serotype 7 (strain AP76), this protein is DNA repair protein RecO.